Reading from the N-terminus, the 388-residue chain is Succinate--CoA ligase [ADP-forming] subunit beta (388 aa).

In terms of domain architecture, ATP-grasp spans 9 to 244 (KSLFAEYGLP…PSQDDAREAH (236 aa)). ATP-binding positions include Lys46, 53–55 (GRG), Glu99, Thr102, and Glu107. 2 residues coordinate Mg(2+): Asn199 and Asp213. Substrate contacts are provided by residues Asn264 and 321-323 (GIV).

Belongs to the succinate/malate CoA ligase beta subunit family. As to quaternary structure, heterotetramer of two alpha and two beta subunits. Mg(2+) serves as cofactor.

The catalysed reaction is succinate + ATP + CoA = succinyl-CoA + ADP + phosphate. The enzyme catalyses GTP + succinate + CoA = succinyl-CoA + GDP + phosphate. The protein operates within carbohydrate metabolism; tricarboxylic acid cycle; succinate from succinyl-CoA (ligase route): step 1/1. Succinyl-CoA synthetase functions in the citric acid cycle (TCA), coupling the hydrolysis of succinyl-CoA to the synthesis of either ATP or GTP and thus represents the only step of substrate-level phosphorylation in the TCA. The beta subunit provides nucleotide specificity of the enzyme and binds the substrate succinate, while the binding sites for coenzyme A and phosphate are found in the alpha subunit. The sequence is that of Succinate--CoA ligase [ADP-forming] subunit beta from Shewanella oneidensis (strain ATCC 700550 / JCM 31522 / CIP 106686 / LMG 19005 / NCIMB 14063 / MR-1).